Consider the following 152-residue polypeptide: Transcriptional regulator MraZ (152 aa).

SpoVT-AbrB domains lie at 5-52 and 81-124; these read ATLV…PLPE and ASEC…DETT.

This sequence belongs to the MraZ family. Forms oligomers.

Its subcellular location is the cytoplasm. The protein resides in the nucleoid. Negatively regulates its own expression and that of the subsequent genes in the proximal part of the division and cell wall (dcw) gene cluster. Acts by binding directly to DNA. May also regulate the expression of genes outside the dcw cluster. The polypeptide is Transcriptional regulator MraZ (Salmonella typhi).